The following is a 401-amino-acid chain: Enolase (401 aa).

Gln-154 contacts (2R)-2-phosphoglycerate. The active-site Proton donor is the Glu-196. 3 residues coordinate Mg(2+): Asp-232, Glu-275, and Asp-302. 4 residues coordinate (2R)-2-phosphoglycerate: Lys-327, Arg-356, Ser-357, and Lys-378. The active-site Proton acceptor is the Lys-327.

The protein belongs to the enolase family. Mg(2+) is required as a cofactor.

The protein resides in the cytoplasm. Its subcellular location is the secreted. The protein localises to the cell surface. The enzyme catalyses (2R)-2-phosphoglycerate = phosphoenolpyruvate + H2O. The protein operates within carbohydrate degradation; glycolysis; pyruvate from D-glyceraldehyde 3-phosphate: step 4/5. Its function is as follows. Catalyzes the reversible conversion of 2-phosphoglycerate (2-PG) into phosphoenolpyruvate (PEP). It is essential for the degradation of carbohydrates via glycolysis. In Haloarcula marismortui (strain ATCC 43049 / DSM 3752 / JCM 8966 / VKM B-1809) (Halobacterium marismortui), this protein is Enolase.